A 231-amino-acid chain; its full sequence is Lipoprotein-releasing system ATP-binding protein LolD (231 aa).

The ABC transporter domain maps to 6–231 (LQVQAVSKSY…YLQAVAEHAQ (226 aa)). 42-49 (GTSGSGKS) provides a ligand contact to ATP.

This sequence belongs to the ABC transporter superfamily. Lipoprotein translocase (TC 3.A.1.125) family. As to quaternary structure, the complex is composed of two ATP-binding proteins (LolD) and two transmembrane proteins (LolC and LolE).

It localises to the cell inner membrane. Functionally, part of the ABC transporter complex LolCDE involved in the translocation of mature outer membrane-directed lipoproteins, from the inner membrane to the periplasmic chaperone, LolA. Responsible for the formation of the LolA-lipoprotein complex in an ATP-dependent manner. This is Lipoprotein-releasing system ATP-binding protein LolD from Shewanella sp. (strain MR-7).